The following is a 299-amino-acid chain: ATP phosphoribosyltransferase (299 aa).

This sequence belongs to the ATP phosphoribosyltransferase family. Long subfamily. In terms of assembly, equilibrium between an active dimeric form, an inactive hexameric form and higher aggregates. Interconversion between the various forms is largely reversible and is influenced by the natural substrates and inhibitors of the enzyme. Mg(2+) serves as cofactor.

It localises to the cytoplasm. The enzyme catalyses 1-(5-phospho-beta-D-ribosyl)-ATP + diphosphate = 5-phospho-alpha-D-ribose 1-diphosphate + ATP. The protein operates within amino-acid biosynthesis; L-histidine biosynthesis; L-histidine from 5-phospho-alpha-D-ribose 1-diphosphate: step 1/9. With respect to regulation, feedback inhibited by histidine. Functionally, catalyzes the condensation of ATP and 5-phosphoribose 1-diphosphate to form N'-(5'-phosphoribosyl)-ATP (PR-ATP). Has a crucial role in the pathway because the rate of histidine biosynthesis seems to be controlled primarily by regulation of HisG enzymatic activity. This Blochmanniella floridana protein is ATP phosphoribosyltransferase.